The sequence spans 397 residues: ATP-dependent RNA helicase eIF4A (397 aa).

Residues 23 to 51 carry the Q motif motif; it reads YKFDDLNLKPNIVRGIFGYGYETPSAIQQ. The Helicase ATP-binding domain maps to 54–224; the sequence is ILPITEGRDV…TKFMNNPVRI (171 aa). 67–74 is a binding site for ATP; sequence AQSGTGKT. Positions 172 to 175 match the DEAD box motif; sequence DEAD. One can recognise a Helicase C-terminal domain in the interval 235–396; it reads GIKQFYINVE…EMPADIGALF (162 aa).

This sequence belongs to the DEAD box helicase family. eIF4A subfamily. In terms of assembly, component of the eIF4F complex, which composition varies with external and internal environmental conditions. It is composed of at least eIF4A, eIF4E and eIF4G.

The protein resides in the cytoplasm. It carries out the reaction ATP + H2O = ADP + phosphate + H(+). Its function is as follows. ATP-dependent RNA helicase which is a subunit of the eIF4F complex involved in cap recognition and is required for mRNA binding to ribosome. In the current model of translation initiation, eIF4A unwinds RNA secondary structures in the 5'-UTR of mRNAs which is necessary to allow efficient binding of the small ribosomal subunit, and subsequent scanning for the initiator codon. The protein is ATP-dependent RNA helicase eIF4A (TIF1) of Candida albicans (strain SC5314 / ATCC MYA-2876) (Yeast).